The sequence spans 161 residues: UPF0262 protein mll6455 (161 aa).

It belongs to the UPF0262 family.

This chain is UPF0262 protein mll6455, found in Mesorhizobium japonicum (strain LMG 29417 / CECT 9101 / MAFF 303099) (Mesorhizobium loti (strain MAFF 303099)).